The chain runs to 211 residues: MRLSVIDHPLVAHKLTALRDARTDSPTFRRLADELVTLLAYEATRDVAVEPHPVTTPVTATTGVRLTSPKPIVVPILRAGLGMLDGMVRLLPTAEVGFLGMIRDETTLQATTYANRLPDDLSGRQVFVLDPMLATGGTLVAAITYLLERGARDVTALCLLAAPEGLEVVRTAFDDHAQVTVVTAAVDERLDENGYIVPGLGDAGDRLYGVV.

5-phospho-alpha-D-ribose 1-diphosphate contacts are provided by residues Arg-78, Arg-103, and 130–138; that span reads DPMLATGGT. Uracil contacts are provided by residues Ile-196 and 201–203; that span reads GDA. A 5-phospho-alpha-D-ribose 1-diphosphate-binding site is contributed by Asp-202.

The protein belongs to the UPRTase family. The cofactor is Mg(2+).

The enzyme catalyses UMP + diphosphate = 5-phospho-alpha-D-ribose 1-diphosphate + uracil. Its pathway is pyrimidine metabolism; UMP biosynthesis via salvage pathway; UMP from uracil: step 1/1. Its activity is regulated as follows. Allosterically activated by GTP. Its function is as follows. Catalyzes the conversion of uracil and 5-phospho-alpha-D-ribose 1-diphosphate (PRPP) to UMP and diphosphate. The chain is Uracil phosphoribosyltransferase from Kineococcus radiotolerans (strain ATCC BAA-149 / DSM 14245 / SRS30216).